Here is a 449-residue protein sequence, read N- to C-terminus: MISQFFILSSKGDPLIYKDFRGDSGGRDVAELFYRKLTGLPGGESPVVMYHGDRHFIHIRHSGLYLVATTLENVSPFSLLELLSRLATLLGDYCGSLNEGTISRNVALVYELLDEVLDYGYVQTTSTEMLRNFIQTEAVVSKPFSLFDLSSVGLFGAETQQNKVAPSSAASRPVLSSRSDQSQKNEVFLDVVERLSVLIASNGSLLKVDVQGEIRLKSFLPSGSEICIGLTEEFCVGKSELRGYGPGIRVDEVSFHSSVNLDEFESHRILRLQPPQGELTVMRYQLSDDLPSPLPFRLFPSVQWDQGSGRLQVYLKLRCDLPPKSQALNIHLHLPLPRGVISLSQELSSPDQKAELGEGALHWDLPRVQGGSQLSGLFQMDVPGLQGLPNHGPSPLGLGPASLSFELPRHTCSGLQVRFLRLSFSACGNANPHKWVRHLSHSNAYVIRI.

An MHD domain is found at 184 to 448 (KNEVFLDVVE…LSHSNAYVIR (265 aa)).

This sequence belongs to the adaptor complexes medium subunit family. In terms of assembly, adaptor protein complex 4 (AP-4) is a heterotetramer composed of two large adaptins (epsilon-type subunit AP4E1 and beta-type subunit AP4B1), a medium adaptin (mu-type subunit AP4M1) and a small adaptin (sigma-type AP4S1). Interacts with tyrosine-based sorting signals on the cytoplasmic tail of cargo proteins such as APP, ATG9A, LAMP2 and NAGPA. Interacts with the C-terminal domain of GRID2. Interacts with GRIA1 and GRIA2; the interaction is indirect via CACNG3. Interacts with CACNG3; CACNG3 associates GRIA1 and GRIA2 with the adaptor protein complex 4 (AP-4) to target them to the somatodendritic compartment of neurons. Interacts with HOOK1 and HOOK2; the interactions are direct, mediate the interaction between FTS-Hook-FHIP (FHF) complex and AP-4 and the perinuclear distribution of AP-4.

Its subcellular location is the golgi apparatus. It is found in the trans-Golgi network membrane. The protein localises to the early endosome. Its function is as follows. Component of the adaptor protein complex 4 (AP-4). Adaptor protein complexes are vesicle coat components involved both in vesicle formation and cargo selection. They control the vesicular transport of proteins in different trafficking pathways. AP-4 forms a non clathrin-associated coat on vesicles departing the trans-Golgi network (TGN) and may be involved in the targeting of proteins from the trans-Golgi network (TGN) to the endosomal-lysosomal system. It is also involved in protein sorting to the basolateral membrane in epithelial cells and the proper asymmetric localization of somatodendritic proteins in neurons. Within AP-4, the mu-type subunit AP4M1 is directly involved in the recognition and binding of tyrosine-based sorting signals found in the cytoplasmic part of cargos. The adaptor protein complex 4 (AP-4) may also recognize other types of sorting signal. The polypeptide is AP-4 complex subunit mu-1 (Mus musculus (Mouse)).